We begin with the raw amino-acid sequence, 312 residues long: Porphobilinogen deaminase (312 aa).

Residue cysteine 241 is modified to S-(dipyrrolylmethanemethyl)cysteine.

The protein belongs to the HMBS family. In terms of assembly, monomer. The cofactor is dipyrromethane.

It catalyses the reaction 4 porphobilinogen + H2O = hydroxymethylbilane + 4 NH4(+). The protein operates within porphyrin-containing compound metabolism; protoporphyrin-IX biosynthesis; coproporphyrinogen-III from 5-aminolevulinate: step 2/4. Functionally, tetrapolymerization of the monopyrrole PBG into the hydroxymethylbilane pre-uroporphyrinogen in several discrete steps. This is Porphobilinogen deaminase from Aliarcobacter butzleri (strain RM4018) (Arcobacter butzleri).